We begin with the raw amino-acid sequence, 206 residues long: 3-isopropylmalate dehydratase small subunit (206 aa).

It belongs to the LeuD family. LeuD type 1 subfamily. As to quaternary structure, heterodimer of LeuC and LeuD.

It catalyses the reaction (2R,3S)-3-isopropylmalate = (2S)-2-isopropylmalate. It functions in the pathway amino-acid biosynthesis; L-leucine biosynthesis; L-leucine from 3-methyl-2-oxobutanoate: step 2/4. Functionally, catalyzes the isomerization between 2-isopropylmalate and 3-isopropylmalate, via the formation of 2-isopropylmaleate. The chain is 3-isopropylmalate dehydratase small subunit from Leptospira borgpetersenii serovar Hardjo-bovis (strain L550).